Consider the following 360-residue polypeptide: 3-dehydroquinate synthase (360 aa).

Residues aspartate 71–lysine 76, glycine 105–aspartate 109, threonine 129–threonine 130, lysine 142, and lysine 151 contribute to the NAD(+) site. Glutamate 184, histidine 247, and histidine 264 together coordinate Zn(2+).

Belongs to the sugar phosphate cyclases superfamily. Dehydroquinate synthase family. The cofactor is Co(2+). Requires Zn(2+) as cofactor. NAD(+) is required as a cofactor.

Its subcellular location is the cytoplasm. It catalyses the reaction 7-phospho-2-dehydro-3-deoxy-D-arabino-heptonate = 3-dehydroquinate + phosphate. The protein operates within metabolic intermediate biosynthesis; chorismate biosynthesis; chorismate from D-erythrose 4-phosphate and phosphoenolpyruvate: step 2/7. In terms of biological role, catalyzes the conversion of 3-deoxy-D-arabino-heptulosonate 7-phosphate (DAHP) to dehydroquinate (DHQ). The polypeptide is 3-dehydroquinate synthase (Azoarcus sp. (strain BH72)).